Consider the following 490-residue polypeptide: Cytochrome P450 2C9 (490 aa).

Cysteine 435 contacts heme.

It belongs to the cytochrome P450 family. Requires heme as cofactor.

Its subcellular location is the endoplasmic reticulum membrane. The protein resides in the microsome membrane. The enzyme catalyses an organic molecule + reduced [NADPH--hemoprotein reductase] + O2 = an alcohol + oxidized [NADPH--hemoprotein reductase] + H2O + H(+). It catalyses the reaction (5Z,8Z,11Z,14Z)-eicosatetraenoate + reduced [NADPH--hemoprotein reductase] + O2 = (8R,9S)-epoxy-(5Z,11Z,14Z)-eicosatrienoate + oxidized [NADPH--hemoprotein reductase] + H2O + H(+). It carries out the reaction (5Z,8Z,11Z,14Z)-eicosatetraenoate + reduced [NADPH--hemoprotein reductase] + O2 = (8S,9R)-epoxy-(5Z,11Z,14Z)-eicosatrienoate + oxidized [NADPH--hemoprotein reductase] + H2O + H(+). The catalysed reaction is (5Z,8Z,11Z,14Z)-eicosatetraenoate + reduced [NADPH--hemoprotein reductase] + O2 = (11R,12S)-epoxy-(5Z,8Z,14Z)-eicosatrienoate + oxidized [NADPH--hemoprotein reductase] + H2O + H(+). The enzyme catalyses (5Z,8Z,11Z,14Z)-eicosatetraenoate + reduced [NADPH--hemoprotein reductase] + O2 = (11S,12R)-epoxy-(5Z,8Z,14Z)-eicosatrienoate + oxidized [NADPH--hemoprotein reductase] + H2O + H(+). It catalyses the reaction (5Z,8Z,11Z,14Z)-eicosatetraenoate + reduced [NADPH--hemoprotein reductase] + O2 = (14R,15S)-epoxy-(5Z,8Z,11Z)-eicosatrienoate + oxidized [NADPH--hemoprotein reductase] + H2O + H(+). It carries out the reaction (5Z,8Z,11Z,14Z)-eicosatetraenoate + reduced [NADPH--hemoprotein reductase] + O2 = (14S,15R)-epoxy-(5Z,8Z,11Z)-eicosatrienoate + oxidized [NADPH--hemoprotein reductase] + H2O + H(+). The catalysed reaction is (5Z,8Z,11Z,14Z,17Z)-eicosapentaenoate + reduced [NADPH--hemoprotein reductase] + O2 = 8,9-epoxy-(5Z,11Z,14Z,17Z)-eicosatetraenoate + oxidized [NADPH--hemoprotein reductase] + H2O + H(+). The enzyme catalyses (5Z,8Z,11Z,14Z,17Z)-eicosapentaenoate + reduced [NADPH--hemoprotein reductase] + O2 = 11,12-epoxy-(5Z,8Z,14Z,17Z)-eicosatetraenoate + oxidized [NADPH--hemoprotein reductase] + H2O + H(+). It catalyses the reaction (5Z,8Z,11Z,14Z,17Z)-eicosapentaenoate + reduced [NADPH--hemoprotein reductase] + O2 = 14,15-epoxy-(5Z,8Z,11Z,17Z)-eicosatetraenoate + oxidized [NADPH--hemoprotein reductase] + H2O + H(+). It carries out the reaction (5Z,8Z,11Z,14Z,17Z)-eicosapentaenoate + reduced [NADPH--hemoprotein reductase] + O2 = (17R,18S)-epoxy-(5Z,8Z,11Z,14Z)-eicosatetraenoate + oxidized [NADPH--hemoprotein reductase] + H2O + H(+). The catalysed reaction is cholesterol + reduced [NADPH--hemoprotein reductase] + O2 = 25-hydroxycholesterol + oxidized [NADPH--hemoprotein reductase] + H2O + H(+). The enzyme catalyses 17beta-estradiol + reduced [NADPH--hemoprotein reductase] + O2 = 2-hydroxy-17beta-estradiol + oxidized [NADPH--hemoprotein reductase] + H2O + H(+). It catalyses the reaction estrone + reduced [NADPH--hemoprotein reductase] + O2 = 2-hydroxyestrone + oxidized [NADPH--hemoprotein reductase] + H2O + H(+). It carries out the reaction (5Z,8Z,11Z,14Z)-eicosatetraenoate + reduced [NADPH--hemoprotein reductase] + O2 = (11R)-hydroxy-(5Z,8Z,12E,14Z)-eicosatetraenoate + oxidized [NADPH--hemoprotein reductase] + H2O + H(+). The catalysed reaction is (5Z,8Z,11Z,14Z)-eicosatetraenoate + reduced [NADPH--hemoprotein reductase] + O2 = (12R)-hydroxy-(5Z,8Z,10E,14Z)-eicosatetraenoate + oxidized [NADPH--hemoprotein reductase] + H2O + H(+). The enzyme catalyses (5Z,8Z,11Z,14Z)-eicosatetraenoate + reduced [NADPH--hemoprotein reductase] + O2 = (15R)-hydroxy-(5Z,8Z,11Z,13E)-eicosatetraenoate + oxidized [NADPH--hemoprotein reductase] + H2O + H(+). It catalyses the reaction (5Z,8Z,11Z,14Z)-eicosatetraenoate + reduced [NADPH--hemoprotein reductase] + O2 = 10-hydroxy-(5Z,8Z,11Z,14Z)-eicosatetraenoate + oxidized [NADPH--hemoprotein reductase] + H2O + H(+). It carries out the reaction (9Z,12Z)-octadecadienoate + reduced [NADPH--hemoprotein reductase] + O2 = (13R)-hydroxy-(9Z,11E)-octadecadienoate + oxidized [NADPH--hemoprotein reductase] + H2O + H(+). The catalysed reaction is (9Z,12Z)-octadecadienoate + reduced [NADPH--hemoprotein reductase] + O2 = (9R)-hydroxy-(10E,12Z)-octadecadienoate + oxidized [NADPH--hemoprotein reductase] + H2O + H(+). The enzyme catalyses (5Z,8Z,11Z,14Z)-eicosatetraenoate + reduced [NADPH--hemoprotein reductase] + O2 = 19-hydroxy-(5Z,8Z,11Z,14Z)-eicosatetraenoate + oxidized [NADPH--hemoprotein reductase] + H2O + H(+). It catalyses the reaction (5Z,8Z,11Z,14Z)-eicosatetraenoate + reduced [NADPH--hemoprotein reductase] + O2 = 13(S)-hydroxy-(5Z,8Z,11Z,14Z)-eicosatetraenoate + oxidized [NADPH--hemoprotein reductase] + H2O + H(+). It carries out the reaction (5Z,8Z,11Z,14Z)-eicosatetraenoate + reduced [NADPH--hemoprotein reductase] + O2 = 14,15-epoxy-(5Z,8Z,11Z)-eicosatrienoate + oxidized [NADPH--hemoprotein reductase] + H2O + H(+). The catalysed reaction is (5Z,8Z,11Z,14Z)-eicosatetraenoate + reduced [NADPH--hemoprotein reductase] + O2 = 11,12-epoxy-(5Z,8Z,14Z)-eicosatrienoate + oxidized [NADPH--hemoprotein reductase] + H2O + H(+). The enzyme catalyses (5Z,8Z,11Z,14Z)-eicosatetraenoate + reduced [NADPH--hemoprotein reductase] + O2 = 13-hydroxy-(5Z,8Z,11Z,14Z)-eicosatetraenoate + oxidized [NADPH--hemoprotein reductase] + H2O + H(+). It catalyses the reaction (4R)-limonene + reduced [NADPH--hemoprotein reductase] + O2 = (1R,5S)-carveol + oxidized [NADPH--hemoprotein reductase] + H2O + H(+). It carries out the reaction (4S)-limonene + reduced [NADPH--hemoprotein reductase] + O2 = (1S,5R)-carveol + oxidized [NADPH--hemoprotein reductase] + H2O + H(+). The catalysed reaction is (4S)-limonene + reduced [NADPH--hemoprotein reductase] + O2 = (4S)-perillyl alcohol + oxidized [NADPH--hemoprotein reductase] + H2O + H(+). Its pathway is lipid metabolism; arachidonate metabolism. The protein operates within steroid metabolism; cholesterol metabolism. It participates in terpene metabolism; (4R)-limonene degradation. In terms of biological role, a cytochrome P450 monooxygenase involved in the metabolism of various endogenous substrates, including fatty acids and steroids. Mechanistically, uses molecular oxygen inserting one oxygen atom into a substrate, and reducing the second into a water molecule, with two electrons provided by NADPH via cytochrome P450 reductase (NADPH--hemoprotein reductase). Catalyzes the epoxidation of double bonds of polyunsaturated fatty acids (PUFA). Catalyzes the hydroxylation of carbon-hydrogen bonds. Metabolizes cholesterol toward 25-hydroxycholesterol, a physiological regulator of cellular cholesterol homeostasis. Exhibits low catalytic activity for the formation of catechol estrogens from 17beta-estradiol (E2) and estrone (E1), namely 2-hydroxy E1 and E2. Catalyzes bisallylic hydroxylation and hydroxylation with double-bond migration of polyunsaturated fatty acids (PUFA). Also metabolizes plant monoterpenes such as limonene. Oxygenates (R)- and (S)-limonene to produce carveol and perillyl alcohol. Contributes to the wide pharmacokinetics variability of the metabolism of drugs such as S-warfarin, diclofenac, phenytoin, tolbutamide and losartan. The protein is Cytochrome P450 2C9 of Homo sapiens (Human).